Consider the following 351-residue polypeptide: MFSLSSRFFLYSLCLSAVAVSAAPGLSLSLSGADSVVDVENLNVAATLTNTGDTTLKILNDPSSILSSKFATHTFDISSDNGSPAFTGVKVKYDPNYVVKKNADSSFTVLAPGESVTVNHALGAAYNFTGSGAASYSIEPSSLFYYVDPDTNELASINADTQQHTTKISGTLAVARRSNLGKRISYNGCTSSRQTTLVSAAAAAQTYAQSSYNYLSSHTASTTRYVTWFGPYTSARHSTVLSCFSNMLAYPYANYEYDCTCTESDVYAYVYPSQFGTIYLCGAFWQTTTTGTDSRGGTLIHESSHFTIICGTQDYAYGQSAAKSLASSNPSEAIKNADNYEYFAENNPAQS.

An N-terminal signal peptide occupies residues 1-22 (MFSLSSRFFLYSLCLSAVAVSA). A propeptide spanning residues 23-183 (APGLSLSLSG…VARRSNLGKR (161 aa)) is cleaved from the precursor. Cystine bridges form between Cys189–Cys259 and Cys261–Cys281. Residue His301 coordinates Zn(2+). Glu302 is an active-site residue. His305 and Asp314 together coordinate Zn(2+).

This sequence belongs to the peptidase M35 family. It depends on Zn(2+) as a cofactor.

The protein localises to the secreted. It catalyses the reaction Preferential cleavage in proteins: -Xaa-|-Lys- (in which Xaa may be Pro).. Inhibited by chelating agents such as imidazole, alpha,alpha'-bipyridine, and 1,10-phenanthroline. The polypeptide is Peptidyl-Lys metalloendopeptidase (MEP) (Armillaria mellea (Honey mushroom)).